The following is a 1372-amino-acid chain: DNA-directed RNA polymerase subunit beta (1372 aa).

The protein belongs to the RNA polymerase beta chain family. The RNAP catalytic core consists of 2 alpha, 1 beta, 1 beta' and 1 omega subunit. When a sigma factor is associated with the core the holoenzyme is formed, which can initiate transcription.

It catalyses the reaction RNA(n) + a ribonucleoside 5'-triphosphate = RNA(n+1) + diphosphate. Functionally, DNA-dependent RNA polymerase catalyzes the transcription of DNA into RNA using the four ribonucleoside triphosphates as substrates. This Nitratidesulfovibrio vulgaris (strain DSM 19637 / Miyazaki F) (Desulfovibrio vulgaris) protein is DNA-directed RNA polymerase subunit beta.